The primary structure comprises 233 residues: Uridylate kinase (233 aa).

Residues 8 to 11 (KLSG), G51, and R55 contribute to the ATP site. UMP-binding positions include D68 and 129-136 (TSNPFFTT). ATP is bound by residues T156, Y162, and D165.

Belongs to the UMP kinase family. In terms of assembly, homohexamer.

Its subcellular location is the cytoplasm. It carries out the reaction UMP + ATP = UDP + ADP. It participates in pyrimidine metabolism; CTP biosynthesis via de novo pathway; UDP from UMP (UMPK route): step 1/1. Its activity is regulated as follows. Inhibited by UTP. Functionally, catalyzes the reversible phosphorylation of UMP to UDP. This Thermosipho melanesiensis (strain DSM 12029 / CIP 104789 / BI429) protein is Uridylate kinase.